We begin with the raw amino-acid sequence, 599 residues long: UPF0313 protein UNCMA_01890 (599 aa).

One can recognise a Radical SAM core domain in the interval 281 to 557; that stretch reads EDIPALRTVR…RALLQYKNPE (277 aa). Residues Cys-299, Cys-303, and Cys-306 each contribute to the [4Fe-4S] cluster site.

The protein belongs to the UPF0313 family. [4Fe-4S] cluster serves as cofactor.

The polypeptide is UPF0313 protein UNCMA_01890 (Methanocella arvoryzae (strain DSM 22066 / NBRC 105507 / MRE50)).